The following is a 419-amino-acid chain: Dual specificity mitogen-activated protein kinase kinase 7 (419 aa).

The residue at position 2 (Ala2) is an N-acetylalanine. The stretch at 2–30 (AASSLEQKLSRLEAKLKQENREARRRIDL) forms a coiled coil. The segment covering 18 to 30 (KQENREARRRIDL) has biased composition (basic and acidic residues). The disordered stretch occupies residues 18 to 77 (KQENREARRRIDLNLDISPQRPRPTLQLPLANDGGSRSPSSESSPQHPTPPSRPRHMLGL). A compositionally biased stretch (low complexity) spans 36-63 (PQRPRPTLQLPLANDGGSRSPSSESSPQ). The tract at residues 37–57 (QRPRPTLQLPLANDGGSRSPS) is d Domain. One can recognise a Protein kinase domain in the interval 120–380 (LENLGEMGSG…YNKLLEHSFI (261 aa)). ATP contacts are provided by residues 126-134 (MGSGTCGQV) and Lys149. Catalysis depends on Asp243, which acts as the Proton acceptor. Position 271 is a phosphoserine; by MAP3K (Ser271). The residue at position 275 (Thr275) is a Phosphothreonine; by MAP3K. Positions 377–400 (HSFIKHYETLEVDVASWFKDVMAK) are DVD domain. Ser411 bears the Phosphoserine mark.

The protein belongs to the protein kinase superfamily. STE Ser/Thr protein kinase family. MAP kinase kinase subfamily. In terms of assembly, interacts with VRK2. Interacts (via its D domain) with its substrates MAPK8/JNK1, MAPK9/JNK2 and MAPK10/JNK3. Interacts (via its DVD domain) with MAP3Ks activators like MAP3K5/ASK1 and MAP3K1/MEKK1. Interacts with MAPK8IP1/JIP1, MAPK8IP2/JIP2 and MAPK8IP3/JIP3 scaffold proteins. Interacts with RASSF7, the interaction promotes phosphorylation. Found in a complex with SH3RF1, RAC1, MAP3K11/MLK3, MAPK8IP1/JIP1 and MAPK8/JNK1. Found in a complex with SH3RF1, RAC2, MAP3K7/TAK1, MAPK8IP1/JIP1, MAPK8/JNK1 and MAPK9/JNK2. The cofactor is Mg(2+). Activated by phosphorylation on Ser-271 and Thr-275 by MAP kinase kinase kinases (MAP3Ks).

The protein resides in the nucleus. It is found in the cytoplasm. The enzyme catalyses L-seryl-[protein] + ATP = O-phospho-L-seryl-[protein] + ADP + H(+). It catalyses the reaction L-threonyl-[protein] + ATP = O-phospho-L-threonyl-[protein] + ADP + H(+). It carries out the reaction L-tyrosyl-[protein] + ATP = O-phospho-L-tyrosyl-[protein] + ADP + H(+). With respect to regulation, activated by phosphorylation by specific MAP kinase kinase kinases such as MAP3K1/MEKK1, MAP3K3/MEKK3, MAP3K11/MLK3 and MAP3K12/DLK. Dual specificity protein kinase which acts as an essential component of the MAP kinase signal transduction pathway. Essential component of the stress-activated protein kinase/c-Jun N-terminal kinase (SAP/JNK) signaling pathway. With MAP2K4/MKK4, is the one of the only known kinase to directly activate the stress-activated protein kinase/c-Jun N-terminal kinases MAPK8/JNK1, MAPK9/JNK2 and MAPK10/JNK3. MAP2K4/MKK4 and MAP2K7/MKK7 both activate the JNKs by phosphorylation, but they differ in their preference for the phosphorylation site in the Thr-Pro-Tyr motif. MAP2K4/MKK4 shows preference for phosphorylation of the Tyr residue and MAP2K7/MKK7 for the Thr residue. The monophosphorylation of JNKs on the Thr residue is sufficient to increase JNK activity indicating that MAP2K7/MKK7 is important to trigger JNK activity, while the additional phosphorylation of the Tyr residue by MAP2K4/MKK4 ensures optimal JNK activation. Has a specific role in JNK signal transduction pathway activated by pro-inflammatory cytokines. The MKK/JNK signaling pathway is also involved in mitochondrial death signaling pathway, including the release cytochrome c, leading to apoptosis. Part of a non-canonical MAPK signaling pathway, composed of the upstream MAP3K12 kinase and downstream MAP kinases MAPK1/ERK2 and MAPK3/ERK1, that enhances the AP-1-mediated transcription of APP in response to APOE. The protein is Dual specificity mitogen-activated protein kinase kinase 7 of Rattus norvegicus (Rat).